We begin with the raw amino-acid sequence, 449 residues long: UDP-N-acetylmuramoylalanine--D-glutamate ligase (449 aa).

Gly-118–Thr-124 lines the ATP pocket.

This sequence belongs to the MurCDEF family.

Its subcellular location is the cytoplasm. The enzyme catalyses UDP-N-acetyl-alpha-D-muramoyl-L-alanine + D-glutamate + ATP = UDP-N-acetyl-alpha-D-muramoyl-L-alanyl-D-glutamate + ADP + phosphate + H(+). It participates in cell wall biogenesis; peptidoglycan biosynthesis. In terms of biological role, cell wall formation. Catalyzes the addition of glutamate to the nucleotide precursor UDP-N-acetylmuramoyl-L-alanine (UMA). This Leuconostoc mesenteroides subsp. mesenteroides (strain ATCC 8293 / DSM 20343 / BCRC 11652 / CCM 1803 / JCM 6124 / NCDO 523 / NBRC 100496 / NCIMB 8023 / NCTC 12954 / NRRL B-1118 / 37Y) protein is UDP-N-acetylmuramoylalanine--D-glutamate ligase.